Here is a 569-residue protein sequence, read N- to C-terminus: MVICCAAVNCSNRQGKGEKRAVSFHRFPLKDSKRLIQWLKAVQRDNWTPTKYSFLCSEHFTKDSFSKRLEDQHRLLKPTAVPSIFHLSEKKRGAGGHGPARRKTTGAMRGHTSAATGKGTIGSSLSSSDNLMAKPESRKLKRASPQDDTAPKATPGAVSQEPGQSLERTPGDQAAPLARGQEEAQVSATEADHQKASSSAADAGGADKSGISMDDFTPPGSGACKFIGSLHSYSFSSKHTRERPSVPREPMDRKRLKRDIEPRCSGNSVAQSPPSSSLTATPQKASQSPSAPPTDVTPKPAAEAVQSEHSDANPMSINEVILSASGACKLIDSLHSYCFSARQNKSQVCCLREQVEKKNGELKSLRQRVSRSDSQVRKLREKLDELRRASLPYLPYLSGLLPPSHEPPKLNPVVEPLSWMLGTWLSEPPGVGTFPTLQPFQYLEEVHISHVGQPMLNFSFNSFHPETHKPMHRECGFIRLKPDTNKVAFVSAQNTGVVEVEEGEVNGQELCVSSHSISRISFAKEPHVQQITRKFRLNSEGKLEQTVSMATTTQPMTQHLHITYKKVTP.

The segment at 1–85 (MVICCAAVNC…LKPTAVPSIF (85 aa)) adopts a THAP-type zinc-finger fold. The tract at residues 83–219 (SIFHLSEKKR…GISMDDFTPP (137 aa)) is disordered. Residues 121–130 (IGSSLSSSDN) show a composition bias toward polar residues. The residue at position 159 (S159) is a Phosphoserine. The segment covering 196-210 (ASSSAADAGGADKSG) has biased composition (low complexity). The short motif at 230 to 233 (LHSY) is the HCFC1-binding motif (HBM) element. S234 is modified (phosphoserine). The disordered stretch occupies residues 235–312 (FSSKHTRERP…EAVQSEHSDA (78 aa)). Basic and acidic residues predominate over residues 242–262 (ERPSVPREPMDRKRLKRDIEP). The span at 265–279 (SGNSVAQSPPSSSLT) shows a compositional bias: polar residues. Residues 280–289 (ATPQKASQSP) show a composition bias toward low complexity. A nitrobindin region spans residues 407 to 569 (PPKLNPVVEP…LHITYKKVTP (163 aa)). Heme b contacts are provided by T436 and H559.

In the C-terminal section; belongs to the nitrobindin family. In terms of assembly, homodimer. Requires heme b as cofactor.

It is found in the cytoplasm. The protein localises to the nucleus. It carries out the reaction peroxynitrite = nitrate. It participates in nitrogen metabolism. In terms of biological role, heme-binding protein able to scavenge peroxynitrite and to protect free L-tyrosine against peroxynitrite-mediated nitration, by acting as a peroxynitrite isomerase that converts peroxynitrite to nitrate. Therefore, this protein likely plays a role in peroxynitrite sensing and in the detoxification of reactive nitrogen and oxygen species (RNS and ROS, respectively). Is able to bind nitric oxide (NO) in vitro, but may act as a sensor of peroxynitrite levels in vivo, possibly modulating the transcriptional activity residing in the N-terminal region. The chain is Peroxynitrite isomerase THAP4 from Rattus norvegicus (Rat).